A 482-amino-acid chain; its full sequence is Cardiolipin synthase (482 aa).

Helical transmembrane passes span 4–24 (LAYL…VTVF) and 34–54 (WAWL…YLIF). PLD phosphodiesterase domains follow at residues 217–244 (LNYR…GDEY) and 395–422 (DNGF…DFRS). Active-site residues include His222, Lys224, Asp229, His400, Lys402, and Asp407.

Belongs to the phospholipase D family. Cardiolipin synthase subfamily.

Its subcellular location is the cell membrane. The catalysed reaction is 2 a 1,2-diacyl-sn-glycero-3-phospho-(1'-sn-glycerol) = a cardiolipin + glycerol. Its function is as follows. Catalyzes the reversible phosphatidyl group transfer from one phosphatidylglycerol molecule to another to form cardiolipin (CL) (diphosphatidylglycerol) and glycerol. In Listeria monocytogenes serotype 4b (strain CLIP80459), this protein is Cardiolipin synthase (cls).